Consider the following 261-residue polypeptide: Membrane protein insertase MisCA (261 aa).

A signal peptide spans 1–22 (MLLKRRIGLLLSMVGVFMLLAG). A lipid anchor (N-palmitoyl cysteine) is attached at Cys-23. Residue Cys-23 is the site of S-diacylglycerol cysteine attachment. 5 helical membrane passes run 61–81 (YGLSIILVTILIRLLILPLMI), 131–151 (LAGCFPILIQMPILIGFYHAI), 174–194 (YILPIVAGVATFVQQKLMMAG), 204–224 (MMLWIMPIMIIVFAINFPAAL), and 225–245 (SLYWVVGNLFMIAQTFLIKGP).

The protein belongs to the OXA1/ALB3/YidC family. Type 2 subfamily. Mostly monomeric, it may also form dimers. Interacts with SpoIIIAE. Forms a complex with the F(1)F(0) ATP synthase in which can be found the alpha, beta, gamma, delta and epsilon subunits of F(1) and a, b and subunits of F(0). YqgA is found in the same complex.

Its subcellular location is the cell membrane. In terms of biological role, required for the insertion and/or proper folding and/or complex formation of integral membrane proteins into the membrane. Involved in integration of membrane proteins that insert both dependently and independently of the Sec translocase complex, as well as at least some lipoproteins. Also involved in protein secretion processes. Essential for sporulation by activating sigma factor SpoIIIG/SigG after engulfment is completed in the prespore, maybe by acting on SpoIIIAE. It has an overlapping, although partly distinct, function compared to YqjG(MisCB). The chain is Membrane protein insertase MisCA (misCA) from Bacillus subtilis (strain 168).